The primary structure comprises 499 residues: Putative hydrolase YuaR (499 aa).

Positions 1-26 (MRVIMKPLRRTLVFFIFSVFLCGTVS) are cleaved as a signal peptide. Residues 94–393 (GSVIIISGGP…DAFPAVNFER (300 aa)) form the AB hydrolase-1 domain. The active-site Nucleophile is S207. D433 is an active-site residue. H460 serves as the catalytic Proton donor.

This sequence belongs to the peptidase S33 family.

In Escherichia coli (strain K12), this protein is Putative hydrolase YuaR (yuaR).